We begin with the raw amino-acid sequence, 149 residues long: Cytochrome c-555 (149 aa).

A signal peptide spans 1–20 (MKRTMIVVTTLLLGAGAVMA). Positions 32, 137, 140, and 141 each coordinate heme c.

Monomer. Post-translationally, binds 1 heme c group covalently per subunit.

The protein resides in the periplasm. Low-spin monoheme cytochrome. This is Cytochrome c-555 (cycC) from Bradyrhizobium diazoefficiens (strain JCM 10833 / BCRC 13528 / IAM 13628 / NBRC 14792 / USDA 110).